We begin with the raw amino-acid sequence, 813 residues long: Polycomb group protein FERTILIZATION-INDEPENDENT SEED 2 (813 aa).

Positions 1-27 are disordered; sequence MARKSIRGKEVVMVSDDDDDDDDVDDD. Over residues 15 to 26 the composition is skewed to acidic residues; that stretch reads SDDDDDDDDVDD. A C2H2-type zinc finger spans residues 134-155; it reads CPFCLIPCGGHEGLQLHLKSSH. 3 disordered regions span residues 197-216, 232-261, and 274-648; these read SPLTFCSKNRNQRRQRDDSN, DLPRGTENDSTHVNDDNVSSPPRAHSSEKI, and ESSE…RKEL. The span at 232 to 246 shows a compositional bias: basic and acidic residues; the sequence is DLPRGTENDSTHVND. The A-1 repeat unit spans residues 243–264; the sequence is HVNDDNVSSPPRAHSSEKISDI. Residues 243–542 are 12 X approximate repeat A; sequence HVNDDNVSSP…HSSKKNKSTR (300 aa). Residues 265–281 form a B-1 repeat; the sequence is LTTTQLAIAESSEPKVP. The tract at residues 265 to 640 is 7 X approximate repeat B; sequence LTTTQLAIAE…KAEPSEPKVT (376 aa). The A-2 repeat unit spans residues 282-304; that stretch reads HVNDGNVSSPPRAHSSAEKNEST. Basic and acidic residues-rich tracts occupy residues 296-307, 319-331, and 344-353; these read SSAEKNESTHVN, HSLEKNESTHVNE, and KKNESTHMND. The stretch at 305–327 is one A-3 repeat; the sequence is HVNDDDDVSSPPRAHSLEKNEST. The A-4 repeat unit spans residues 328 to 349; sequence HVNEDNISSPPKAHSSKKNEST. The A-5 repeat unit spans residues 350–371; the sequence is HMNDEDVSFPPRTRSSKETSDI. One copy of the B-2 repeat lies at 372–388; sequence LTTTQPAIVEPSEPKVR. Residues 388–402 show a composition bias toward basic residues; it reads RRGSRRKQLYAKRYK. The stretch at 403–419 is one B-3 repeat; sequence ARETQPAIAESSEPKVL. 2 stretches are compositionally biased toward basic and acidic residues: residues 414-423 and 453-462; these read SEPKVLHVND and SEPKVPHVND. Residues 420-441 form an A-6 repeat; that stretch reads HVNDENVSSPPEAHSLEKASDI. The B-4 repeat unit spans residues 442–458; it reads LTTTQPAIAESSEPKVP. An A-7 repeat occupies 459–481; the sequence is HVNDENVSSTPRAHSSKKNKSTR. Basic residues predominate over residues 472–481; it reads HSSKKNKSTR. The A-8 repeat unit spans residues 482–502; sequence KNVDNVPSPPKTRSSKKTSDI. Over residues 501 to 512 the composition is skewed to polar residues; the sequence is DILTTTQPTIAE. The B-5 repeat unit spans residues 503–519; the sequence is LTTTQPTIAESSEPKVR. A compositionally biased stretch (basic and acidic residues) spans 514–523; that stretch reads SEPKVRHVND. Residues 520 to 542 form an A-9 repeat; it reads HVNDDNVSSTPRAHSSKKNKSTR. One copy of the A-10 repeat lies at 543–563; sequence KNDDNIPSPPKTRSSKKTSNI. Residues 564–579 form a B-6 repeat; sequence LTRTQPAIAESEPKVP. The span at 574–586 shows a compositional bias: basic and acidic residues; that stretch reads SEPKVPHVNDDKV. The stretch at 580-601 is one A-11 repeat; that stretch reads HVNDDKVSSTPRAHSSKKNKST. Basic residues predominate over residues 593–602; the sequence is HSSKKNKSTH. One copy of the A-12 repeat lies at 602–623; sequence HKKDDNASLPPKTRSSKKTSDI. One copy of the B-7 repeat lies at 624 to 640; sequence LATTQPAKAEPSEPKVT. The segment at 648 to 783 is VEFS-box; sequence LHAERCEAKR…CAKTFHKCTT (136 aa).

This sequence belongs to the VEFS (VRN2-EMF2-FIS2-SU(Z)12) family. As to quaternary structure, probably indirectly associated with FIE and/or MEA. In plants, PcG complexes are probably composed of a member of the EZ family (CLF or MEA), FIE, and a member of the VEFS family (FIS2, VRN2 or EMF2). In terms of tissue distribution, weakly expressed. Expressed in late siliques.

Its subcellular location is the nucleus. In terms of biological role, polycomb group (PcG) protein. PcG proteins act by forming multiprotein complexes, which are required to maintain the transcriptionally repressive state of homeotic genes throughout development. PcG proteins are not required to initiate repression, but to maintain it during later stages of development. They probably act via the methylation of histones, rendering chromatin heritably changed in its expressibility. Required to prevent the proliferation of the central cell by repressing unknown target genes before fertilization. Regulates the anteroposterior organization of the endosperm. The chain is Polycomb group protein FERTILIZATION-INDEPENDENT SEED 2 from Arabidopsis thaliana (Mouse-ear cress).